Here is a 203-residue protein sequence, read N- to C-terminus: MRRGRVWLAALCLAAGAAHADAIDTLKGFVAEVKTGRAAFTQTVTSPDGAKKKSSSGSFEFSRPNRFRFAYTKPYEQLIVSDGQKVWLHDPDLNQVTVRPVGQALGATPAALLAGASLEKDFELKALPDDGGLQWAQALPRVKEGSFQSLKVGFRGKTLAAVEIVDAFGQRSRLEFSQFEADAKLPADRFGFTPPAGADVIAQ.

The signal sequence occupies residues 1–20; sequence MRRGRVWLAALCLAAGAAHA.

This sequence belongs to the LolA family. In terms of assembly, monomer.

Its subcellular location is the periplasm. Functionally, participates in the translocation of lipoproteins from the inner membrane to the outer membrane. Only forms a complex with a lipoprotein if the residue after the N-terminal Cys is not an aspartate (The Asp acts as a targeting signal to indicate that the lipoprotein should stay in the inner membrane). The chain is Outer-membrane lipoprotein carrier protein from Methylibium petroleiphilum (strain ATCC BAA-1232 / LMG 22953 / PM1).